Reading from the N-terminus, the 152-residue chain is Large ribosomal subunit protein bL17 (152 aa).

The interval 121 to 140 (APSASQKTGKQDRAKRVKGS) is disordered.

This sequence belongs to the bacterial ribosomal protein bL17 family. In terms of assembly, part of the 50S ribosomal subunit. Contacts protein L32.

This chain is Large ribosomal subunit protein bL17, found in Pelodictyon phaeoclathratiforme (strain DSM 5477 / BU-1).